The primary structure comprises 385 residues: G2/mitotic-specific cyclin-B3 (385 aa).

Residues methionine 1–alanine 16 are compositionally biased toward polar residues. Disordered regions lie at residues methionine 1–glycine 48 and serine 63–arginine 88. Composition is skewed to basic and acidic residues over residues aspartate 17–glutamate 28 and serine 63–glutamate 80.

The protein belongs to the cyclin family. Cyclin AB subfamily.

Its subcellular location is the nucleus. In terms of biological role, could be involved at the G2/M (mitosis) transition. Interacts with the CDK1 and CDK2 protein kinases. G2/M cyclins accumulate steadily during G2 and are abruptly destroyed at mitosis. Plays a role during oocyte meiosis II. In Caenorhabditis elegans, this protein is G2/mitotic-specific cyclin-B3 (cyb-3).